The sequence spans 264 residues: Thymidylate synthase (264 aa).

Residue arginine 21 participates in dUMP binding. A (6R)-5,10-methylene-5,6,7,8-tetrahydrofolate-binding site is contributed by histidine 51. 126–127 (RR) lines the dUMP pocket. The Nucleophile role is filled by cysteine 146. DUMP is bound by residues 166 to 169 (RSCD), asparagine 177, and 207 to 209 (HLY). Aspartate 169 is a (6R)-5,10-methylene-5,6,7,8-tetrahydrofolate binding site. Alanine 263 serves as a coordination point for (6R)-5,10-methylene-5,6,7,8-tetrahydrofolate.

Belongs to the thymidylate synthase family. Bacterial-type ThyA subfamily. Homodimer.

It is found in the cytoplasm. It carries out the reaction dUMP + (6R)-5,10-methylene-5,6,7,8-tetrahydrofolate = 7,8-dihydrofolate + dTMP. It functions in the pathway pyrimidine metabolism; dTTP biosynthesis. Functionally, catalyzes the reductive methylation of 2'-deoxyuridine-5'-monophosphate (dUMP) to 2'-deoxythymidine-5'-monophosphate (dTMP) while utilizing 5,10-methylenetetrahydrofolate (mTHF) as the methyl donor and reductant in the reaction, yielding dihydrofolate (DHF) as a by-product. This enzymatic reaction provides an intracellular de novo source of dTMP, an essential precursor for DNA biosynthesis. This chain is Thymidylate synthase, found in Enterobacter sp. (strain 638).